Reading from the N-terminus, the 244-residue chain is MKVSLFITCVSDIVFADVGKHTVEILERVGCEVDFPAAQTCCGQPAYNSGYLQEAKKSMKQMIKAFKNSEYVVGPSGSCVGMLKEYPHIFKGDPDWEQPAIDLANKSYEITQFLVDVLGVTDLGSTFKGRVTYHPSCHMTRVLGVKDAPQKLLQSVKGIDFVELPVKEDCCGFGGTFSIKNPEISREMVKEKSQHVSETKAEYLVGGDMGCLMNIGGRMRREGKDVKVVHITEILNTHREGGIA.

It belongs to the LutA/YkgE family.

Is involved in L-lactate degradation and allows cells to grow with lactate as the sole carbon source. The chain is Lactate utilization protein A from Oceanobacillus iheyensis (strain DSM 14371 / CIP 107618 / JCM 11309 / KCTC 3954 / HTE831).